The primary structure comprises 241 residues: Small ribosomal subunit protein uS2 (241 aa).

It belongs to the universal ribosomal protein uS2 family.

This is Small ribosomal subunit protein uS2 from Photorhabdus laumondii subsp. laumondii (strain DSM 15139 / CIP 105565 / TT01) (Photorhabdus luminescens subsp. laumondii).